A 427-amino-acid polypeptide reads, in one-letter code: MNTLTLEPIARVEGTVNLPGSKSVSNRALLLAALARGTTRLTNLLDSDDIRHMLNALKTLGVSYELSANKTECTVHGLGRAFSSSEPVNLFLGNAGTAMRPLCAALCLSNGEFTLTGEPRMEERPIAHLVDALRQAGAHVHYLKKDGYPPLTIEGKGLWGGEVVIDGSVSSQFLTAFLMAAPLASGDVRIRIRGELVSKPYIDITLHIMKQFGVTVEHDDYQVFYVRGNQTYVSPGTFLVEGDASSASYFLAAGAIKGKVRVTGIGKNSIQGDIRFADVLEKMGAKITWGDDFIEAENVGELQAVDLDMNQIPDAAMTIATAALFANGKTAIRNIYNWRVKETDRLTAMATELRKVGAEVVEGHDFIEITPPAQLKHAAIDTYNDHRIAMCFSLVALSDTKVTINDPGCTSKTFPDYFTKFASVSQR.

3 residues coordinate 3-phosphoshikimate: lysine 22, serine 23, and arginine 27. Lysine 22 provides a ligand contact to phosphoenolpyruvate. Positions 96 and 124 each coordinate phosphoenolpyruvate. Residues serine 170, serine 171, glutamine 172, serine 198, aspartate 314, asparagine 337, and lysine 341 each coordinate 3-phosphoshikimate. Residue glutamine 172 coordinates phosphoenolpyruvate. Aspartate 314 acts as the Proton acceptor in catalysis. The phosphoenolpyruvate site is built by arginine 345, arginine 387, and lysine 412.

Belongs to the EPSP synthase family. As to quaternary structure, monomer.

The protein localises to the cytoplasm. The enzyme catalyses 3-phosphoshikimate + phosphoenolpyruvate = 5-O-(1-carboxyvinyl)-3-phosphoshikimate + phosphate. It functions in the pathway metabolic intermediate biosynthesis; chorismate biosynthesis; chorismate from D-erythrose 4-phosphate and phosphoenolpyruvate: step 6/7. In terms of biological role, catalyzes the transfer of the enolpyruvyl moiety of phosphoenolpyruvate (PEP) to the 5-hydroxyl of shikimate-3-phosphate (S3P) to produce enolpyruvyl shikimate-3-phosphate and inorganic phosphate. In Tolumonas auensis (strain DSM 9187 / NBRC 110442 / TA 4), this protein is 3-phosphoshikimate 1-carboxyvinyltransferase.